The chain runs to 321 residues: MNQHYGRHGRGRGRDFAACAPPKKKGRNHIPERWKDYLPVGQRMPGTRFIAFKVPLQKKFEAKLMPEECFSPLDLFNKIQEQNEELGLIIDLTYTQRYYKVEDLPETISYIKIFTVGHQIPDNDTIFQFKCAVKEFLKKNKNNDKLIGVHCTHGLNRTGYLICRYLIDVEGMRPDDAIELFNSCRGHCIERQNYIENLQKRHVRKNRNVSAPRTDGLEDSADPTEQVYTNNKPVKKKPRKNRRGGHLAPSQHFQHQTQSSPYSLRKWSQNQSVYQRGLVPPPGPAGEDYSQRRFFWSARPNKWTAESYQRPFYPYYWEWNL.

The segment covering 1 to 11 (MNQHYGRHGRG) has biased composition (basic residues). The segment at 1-27 (MNQHYGRHGRGRGRDFAACAPPKKKGR) is disordered. The Tyrosine-protein phosphatase domain occupies 60-207 (FEAKLMPEEC…LQKRHVRKNR (148 aa)). The active-site Phosphocysteine intermediate is C151. Residue 152-157 (THGLNR) participates in substrate binding. Residue R157 is the Proton donor/acceptor of the active site. Residues 205-262 (KNRNVSAPRTDGLEDSADPTEQVYTNNKPVKKKPRKNRRGGHLAPSQHFQHQTQSSPY) are disordered. Residues 233 to 245 (PVKKKPRKNRRGG) show a composition bias toward basic residues. Residues 251-262 (QHFQHQTQSSPY) show a composition bias toward polar residues.

This sequence belongs to the protein-tyrosine phosphatase family. Non-receptor class dual specificity subfamily. As to quaternary structure, monomer. May interact with SFRS7 and SFRS9/SRP30C.

It is found in the nucleus. The protein localises to the nucleus speckle. In terms of biological role, possesses RNA 5'-triphosphatase and diphosphatase activities, but displays a poor protein-tyrosine phosphatase activity. In addition, has phosphatase activity with ATP, ADP and O-methylfluorescein phosphate (in vitro). Binds to RNA. May participate in nuclear mRNA metabolism. The protein is RNA/RNP complex-1-interacting phosphatase (Dusp11) of Mus musculus (Mouse).